The following is a 270-amino-acid chain: Diaminopimelate epimerase (270 aa).

3 residues coordinate substrate: Asn15, Gln49, and Asn66. The active-site Proton donor is Cys75. Substrate is bound by residues 76 to 77, Asn155, Asn187, and 204 to 205; these read GN and ER. The Proton acceptor role is filled by Cys213. 214-215 contacts substrate; it reads GS.

Belongs to the diaminopimelate epimerase family. As to quaternary structure, homodimer.

The protein resides in the cytoplasm. The enzyme catalyses (2S,6S)-2,6-diaminopimelate = meso-2,6-diaminopimelate. The protein operates within amino-acid biosynthesis; L-lysine biosynthesis via DAP pathway; DL-2,6-diaminopimelate from LL-2,6-diaminopimelate: step 1/1. In terms of biological role, catalyzes the stereoinversion of LL-2,6-diaminopimelate (L,L-DAP) to meso-diaminopimelate (meso-DAP), a precursor of L-lysine and an essential component of the bacterial peptidoglycan. The polypeptide is Diaminopimelate epimerase (Rickettsia rickettsii (strain Iowa)).